A 217-amino-acid polypeptide reads, in one-letter code: MTGKITTLLFDLDGTLINTNELIIKTFQATLQEFLPDRVFTREDILPFIGPSLMETFREINPAHAEEMRVFYREYNLKHHDDLILEYEGVYEAIRVLYEEDYKLGIVSTKMYDTIMRGLKVTGLDKFFQVVIGLDQVSNAKPDPEGIEMALSLLNATKEEAIMIGDNYHDIEAGKNAETLTAGVAWAIKGPEHLAQFQPDFMLEKMSDLLAIVRDEE.

Residue D11 is the Nucleophile of the active site.

This sequence belongs to the HAD-like hydrolase superfamily. PpaX family. The cofactor is Mg(2+).

It catalyses the reaction diphosphate + H2O = 2 phosphate + H(+). Functionally, hydrolyzes pyrophosphate formed during P-Ser-HPr dephosphorylation by HPrK/P. Might play a role in controlling the intracellular pyrophosphate pool. This is Pyrophosphatase PpaX from Listeria welshimeri serovar 6b (strain ATCC 35897 / DSM 20650 / CCUG 15529 / CIP 8149 / NCTC 11857 / SLCC 5334 / V8).